Reading from the N-terminus, the 245-residue chain is uncharacterized protein (245 aa).

The next 4 helical transmembrane spans lie at 10 to 30 (FYTLFGLIWSLLVFFFLSPWY), 94 to 114 (TLAFLSTTFLIYFTIIFYVHI), 134 to 154 (VLIGSPLVSFFLSFITLFLII), and 196 to 216 (RGWIILMVDTILTFFATIYCW).

The protein resides in the membrane. This is an uncharacterized protein from Dictyostelium discoideum (Social amoeba).